The sequence spans 918 residues: UPF0182 protein CPR_0011 (918 aa).

A run of 7 helical transmembrane segments spans residues 8–28 (TVLISILLLVVVFFVSTNFII), 46–66 (LIAICKLFVPIFILYFCVIAI), 91–111 (FLLSNLVISILGAGATATTQW), 151–171 (AISLIIILVLITVIIYLALGF), 200–220 (LAVLASVLSLLIGCSYLLKSY), 243–263 (IFYKVIAIACVISSIVVFISI), and 271–291 (IIISIASIAVLIVLEPVVAIF).

The protein belongs to the UPF0182 family.

The protein localises to the cell membrane. This Clostridium perfringens (strain SM101 / Type A) protein is UPF0182 protein CPR_0011.